The primary structure comprises 369 residues: Histidinol-phosphate aminotransferase (369 aa).

An N6-(pyridoxal phosphate)lysine modification is found at Lys-223.

The protein belongs to the class-II pyridoxal-phosphate-dependent aminotransferase family. Histidinol-phosphate aminotransferase subfamily. In terms of assembly, homodimer. The cofactor is pyridoxal 5'-phosphate.

It carries out the reaction L-histidinol phosphate + 2-oxoglutarate = 3-(imidazol-4-yl)-2-oxopropyl phosphate + L-glutamate. It participates in amino-acid biosynthesis; L-histidine biosynthesis; L-histidine from 5-phospho-alpha-D-ribose 1-diphosphate: step 7/9. In Shouchella clausii (strain KSM-K16) (Alkalihalobacillus clausii), this protein is Histidinol-phosphate aminotransferase.